A 513-amino-acid polypeptide reads, in one-letter code: Probable DNA primase large subunit (513 aa).

Residues Cys-315, Cys-398, Cys-415, and Cys-457 each contribute to the [4Fe-4S] cluster site.

The protein belongs to the eukaryotic-type primase large subunit family. Heterodimer of a small subunit and a large subunit. It depends on [4Fe-4S] cluster as a cofactor.

In terms of biological role, DNA primase is the polymerase that synthesizes small RNA primers for the Okazaki fragments made during discontinuous DNA replication. The chain is Probable DNA primase large subunit from Neurospora crassa (strain ATCC 24698 / 74-OR23-1A / CBS 708.71 / DSM 1257 / FGSC 987).